Reading from the N-terminus, the 91-residue chain is Small ribosomal subunit protein uS19 (91 aa).

It belongs to the universal ribosomal protein uS19 family.

Protein S19 forms a complex with S13 that binds strongly to the 16S ribosomal RNA. The polypeptide is Small ribosomal subunit protein uS19 (rpsS) (Mycoplasmopsis pulmonis (strain UAB CTIP) (Mycoplasma pulmonis)).